The following is a 454-amino-acid chain: Repulsive guidance molecule A (454 aa).

A signal peptide spans 1 to 47; it reads MQPPRERLVVTGRAGWMGMGRGAGRSALGLWPTLAFLLCSFPAAISP. The propeptide at 48 to 169 is removed in mature form; that stretch reads CKILKCNSEF…NYTHCGLFGD (122 aa). Positions 114-126 are enriched in polar residues; that stretch reads HNCSKDGPTSQPR. Positions 114–141 are disordered; that stretch reads HNCSKDGPTSQPRVRTLPPAGDSQERSD. 2 N-linked (GlcNAc...) asparagine glycosylation sites follow: Asn-115 and Asn-160. 2 disulfides stabilise this stretch: Cys-146/Cys-227 and Cys-164/Cys-316. N-linked (GlcNAc...) asparagine glycosylation occurs at Asn-388. A lipid anchor (GPI-anchor amidated alanine) is attached at Ala-427. Residues 428–454 constitute a propeptide, removed in mature form; sequence AAATTFPLAPQILLGTIPLLVLLPVLW.

Belongs to the repulsive guidance molecule (RGM) family. Interacts with NEO1, BMP2 and BMP4. In terms of processing, autocatalytically cleaved at low pH; the two chains remain linked via two disulfide bonds. As to expression, expressed in gradient in periventricular layers of the developing nervous system. In adult, expressed in scattered cells throughout the brain.

The protein localises to the cell membrane. In terms of biological role, member of the repulsive guidance molecule (RGM) family that performs several functions in the developing and adult nervous system. Regulates cephalic neural tube closure, inhibits neurite outgrowth and cortical neuron branching, and the formation of mature synapses. Binding to its receptor NEO1/neogenin induces activation of RHOA-ROCK1/Rho-kinase signaling pathway through UNC5B-ARHGEF12/LARG-PTK2/FAK1 cascade, leading to collapse of the neuronal growth cone and neurite outgrowth inhibition. Furthermore, RGMA binding to NEO1/neogenin leads to HRAS inactivation by influencing HRAS-PTK2/FAK1-AKT1 pathway. It also functions as a bone morphogenetic protein (BMP) coreceptor that may signal through SMAD1, SMAD5, and SMAD8. The protein is Repulsive guidance molecule A (Rgma) of Mus musculus (Mouse).